The primary structure comprises 419 residues: Light-independent protochlorophyllide reductase subunit N (419 aa).

Residues Cys-17, Cys-42, and Cys-103 each coordinate [4Fe-4S] cluster.

This sequence belongs to the BchN/ChlN family. In terms of assembly, protochlorophyllide reductase is composed of three subunits; ChlL, ChlN and ChlB. Forms a heterotetramer of two ChlB and two ChlN subunits. The cofactor is [4Fe-4S] cluster.

The enzyme catalyses chlorophyllide a + oxidized 2[4Fe-4S]-[ferredoxin] + 2 ADP + 2 phosphate = protochlorophyllide a + reduced 2[4Fe-4S]-[ferredoxin] + 2 ATP + 2 H2O. It functions in the pathway porphyrin-containing compound metabolism; chlorophyll biosynthesis (light-independent). Functionally, component of the dark-operative protochlorophyllide reductase (DPOR) that uses Mg-ATP and reduced ferredoxin to reduce ring D of protochlorophyllide (Pchlide) to form chlorophyllide a (Chlide). This reaction is light-independent. The NB-protein (ChlN-ChlB) is the catalytic component of the complex. This Prochlorococcus marinus (strain NATL1A) protein is Light-independent protochlorophyllide reductase subunit N.